A 464-amino-acid chain; its full sequence is tRNA-2-methylthio-N(6)-dimethylallyladenosine synthase (464 aa).

Residues 19-135 enclose the MTTase N-terminal domain; it reads GSYWITTFGC…LENLLGKVDL (117 aa). Cysteine 28, cysteine 64, cysteine 98, cysteine 170, cysteine 174, and cysteine 177 together coordinate [4Fe-4S] cluster. The 238-residue stretch at 156-393 folds into the Radical SAM core domain; it reads RESSICGWVN…NELVETTSKQ (238 aa). The region spanning 396–464 is the TRAM domain; it reads ERYLDSIESV…PFSLTGILCL (69 aa).

This sequence belongs to the methylthiotransferase family. MiaB subfamily. As to quaternary structure, monomer. The cofactor is [4Fe-4S] cluster.

The protein resides in the cytoplasm. It catalyses the reaction N(6)-dimethylallyladenosine(37) in tRNA + (sulfur carrier)-SH + AH2 + 2 S-adenosyl-L-methionine = 2-methylsulfanyl-N(6)-dimethylallyladenosine(37) in tRNA + (sulfur carrier)-H + 5'-deoxyadenosine + L-methionine + A + S-adenosyl-L-homocysteine + 2 H(+). Its function is as follows. Catalyzes the methylthiolation of N6-(dimethylallyl)adenosine (i(6)A), leading to the formation of 2-methylthio-N6-(dimethylallyl)adenosine (ms(2)i(6)A) at position 37 in tRNAs that read codons beginning with uridine. The sequence is that of tRNA-2-methylthio-N(6)-dimethylallyladenosine synthase from Prochlorococcus marinus (strain MIT 9215).